The sequence spans 238 residues: Small ribosomal subunit protein uS2 (238 aa).

Belongs to the universal ribosomal protein uS2 family.

The polypeptide is Small ribosomal subunit protein uS2 (Prochlorococcus marinus (strain MIT 9211)).